The sequence spans 496 residues: Cytochrome P450 71D181 (496 aa).

Residues 1 to 21 (MDISISWVAIILVISSYFIFM) traverse the membrane as a helical; Signal-anchor for type II membrane protein segment. Heme is bound at residue Cys435. The interval 471–496 (MSETPGLSGPRKNPLIMVPTIHNPTS) is disordered.

This sequence belongs to the cytochrome P450 family. Requires heme as cofactor. Expressed at low levels in flowers, leaves and stems.

Its subcellular location is the membrane. It catalyses the reaction alpha-terpinene + 2 reduced [NADPH--hemoprotein reductase] + 2 O2 = carvacrol + 2 oxidized [NADPH--hemoprotein reductase] + 3 H2O + 2 H(+). The enzyme catalyses gamma-terpinene + 2 reduced [NADPH--hemoprotein reductase] + 2 O2 = carvacrol + 2 oxidized [NADPH--hemoprotein reductase] + 3 H2O + 2 H(+). It carries out the reaction (4S)-limonene + reduced [NADPH--hemoprotein reductase] + O2 = (1S,5R)-carveol + oxidized [NADPH--hemoprotein reductase] + H2O + H(+). The catalysed reaction is (4R)-limonene + reduced [NADPH--hemoprotein reductase] + O2 = (1R,5S)-carveol + oxidized [NADPH--hemoprotein reductase] + H2O + H(+). The protein operates within secondary metabolite biosynthesis; terpenoid biosynthesis. In terms of biological role, involved in the biosynthesis of phenolic monoterpenes natural products thymol and carvacrol which have a broad range of biological activities acting as antimicrobial compounds, insecticides, antioxidants and pharmaceutical agents. Catalyzes the C2-hydroxylation of gamma-terpinene and alpha-terpinene to produce carvacrol. Also mediates the C6-hydroxylation of (4S)-limonene and (4R)-limonene to form carveol. In Origanum vulgare (Wild marjoram), this protein is Cytochrome P450 71D181.